Consider the following 290-residue polypeptide: Aquaporin-12 (290 aa).

The next 2 helical transmembrane spans lie at 1 to 21 and 67 to 87; these read MASL…CEVA and FGPD…GVTF. Residues 93–95 carry the NPA 1 motif; that stretch reads NPT. Helical transmembrane passes span 112-138, 158-178, and 191-211; these read LLKL…WELS, SVLQ…LSLL, and ALAL…SAFF. The NPA 2 motif lies at 212-214; sequence NPA. A helical membrane pass occupies residues 228 to 248; that stretch reads LLEYAHVYCLGPVAGMILAVL. Residues 271 to 290 are disordered; that stretch reads RTPRGKLSPGSVDAKMHKGE.

This sequence belongs to the MIP/aquaporin (TC 1.A.8) family. AQP11/AQP12 subfamily. In terms of tissue distribution, restricted to pancreatic acinar cells.

The protein resides in the membrane. Its function is as follows. Aquaporins facilitate the transport of water and small neutral solutes across cell membranes. The protein is Aquaporin-12 (Aqp12) of Mus musculus (Mouse).